A 127-amino-acid chain; its full sequence is Translation initiation factor 5A (127 aa).

Lysine 35 is modified (hypusine).

This sequence belongs to the eIF-5A family.

It is found in the cytoplasm. Functions by promoting the formation of the first peptide bond. In Methanospirillum hungatei JF-1 (strain ATCC 27890 / DSM 864 / NBRC 100397 / JF-1), this protein is Translation initiation factor 5A.